A 420-amino-acid polypeptide reads, in one-letter code: tRNA(Ile)-lysidine synthase, chloroplastic (420 aa).

63-68 (SGGQDS) is an ATP binding site.

The protein belongs to the tRNA(Ile)-lysidine synthase family.

The protein localises to the plastid. Its subcellular location is the chloroplast. It carries out the reaction cytidine(34) in tRNA(Ile2) + L-lysine + ATP = lysidine(34) in tRNA(Ile2) + AMP + diphosphate + H(+). Its function is as follows. Ligates lysine onto the cytidine present at position 34 of the AUA codon-specific tRNA(Ile) that contains the anticodon CAU, in an ATP-dependent manner. Cytidine is converted to lysidine, thus changing the amino acid specificity of the tRNA from methionine to isoleucine. The polypeptide is tRNA(Ile)-lysidine synthase, chloroplastic (Zygnema circumcarinatum (Green alga)).